Here is a 566-residue protein sequence, read N- to C-terminus: Peroxisomal targeting signal receptor (566 aa).

Cysteine 5 is covalently cross-linked (Glycyl cysteine thioester (Cys-Gly) (interchain with G-Cter in ubiquitin)). Residues 6 to 28 (SVGSNPLAQLNKHAQQNPALRQV) form an amphipathic helix 1 (AH1) region. Lysine 17 participates in a covalent cross-link: Glycyl lysine isopeptide (Lys-Gly) (interchain with G-Cter in ubiquitin). An amphipathic helix 2 (AH2) region spans residues 53-71 (RFQMDQFMNRSPGFSDGQL). The segment at 88–159 (GLKKQDSGSS…IGRPMMHTGI (72 aa)) is disordered. Residues 94–142 (SGSSNMSAGDTAQHSRSWGNEFNSRSPQQGLASRVNNVERISNTNSMSS) are compositionally biased toward polar residues. Residues 111 to 115 (WGNEF) carry the WxxxF/Y motif 1 motif. Residues 145–151 (PGMSRIG) are amphipathic helix 3 (AH3). The short motif at 187 to 191 (WNEQF) is the WxxxF/Y motif 2 element. The amphipathic helix 4 (AH4) stretch occupies residues 225–241 (FQEVWDKLQAETADNNL). The WxxxF/Y motif 3 signature appears at 248–252 (WEKDY). TPR repeat units follow at residues 277 to 311 (NPNA…DPAH), 312 to 345 (VDAW…DPTN), 416 to 449 (PEVQ…NPND), 451 to 483 (LMWN…KPSF), and 485 to 517 (RARY…HEVE).

The protein belongs to the peroxisomal targeting signal receptor family. In terms of assembly, interacts (via WxxxF/Y and LVxEF motifs) with PEX14; promoting translocation through the PEX13-PEX14 docking complex. Monoubiquitinated at Cys-5 by PEX2 during PEX5 passage through the retrotranslocation channel: monoubiquitination acts as a signal for PEX5 extraction and is required for proper export from peroxisomes and recycling. When PEX5 recycling is compromised, polyubiquitinated at Lys-17 by PEX10 during its passage through the retrotranslocation channel, leading to its degradation.

It localises to the cytoplasm. Its subcellular location is the cytosol. It is found in the peroxisome matrix. Functionally, receptor that mediates peroxisomal import of proteins containing a C-terminal PTS1-type tripeptide peroxisomal targeting signal (SKL-type). Binds to cargo proteins containing a PTS1 peroxisomal targeting signal in the cytosol, and translocates them into the peroxisome matrix by passing through the PEX13-PEX14 docking complex along with cargo proteins. PEX5 receptor is then retrotranslocated into the cytosol, leading to release of bound cargo in the peroxisome matrix, and reset for a subsequent peroxisome import cycle. The protein is Peroxisomal targeting signal receptor (PEX5) of Kluyveromyces lactis (strain ATCC 8585 / CBS 2359 / DSM 70799 / NBRC 1267 / NRRL Y-1140 / WM37) (Yeast).